A 191-amino-acid polypeptide reads, in one-letter code: Thymidylate kinase (191 aa).

7–14 (GIDTAGKS) lines the ATP pocket.

Belongs to the thymidylate kinase family.

The enzyme catalyses dTMP + ATP = dTDP + ADP. Phosphorylation of dTMP to form dTDP in both de novo and salvage pathways of dTTP synthesis. This chain is Thymidylate kinase, found in Sulfurimonas denitrificans (strain ATCC 33889 / DSM 1251) (Thiomicrospira denitrificans (strain ATCC 33889 / DSM 1251)).